Consider the following 126-residue polypeptide: Small ribosomal subunit protein bS16 (126 aa).

The interval 87–126 is disordered; sequence ARSNPEKALPGKRALERVAEKKQKAEDAAAAAAAEASAAE. Over residues 99-113 the composition is skewed to basic and acidic residues; sequence RALERVAEKKQKAED. Positions 114 to 126 are enriched in low complexity; that stretch reads AAAAAAAEASAAE.

This sequence belongs to the bacterial ribosomal protein bS16 family.

This Agrobacterium fabrum (strain C58 / ATCC 33970) (Agrobacterium tumefaciens (strain C58)) protein is Small ribosomal subunit protein bS16.